The sequence spans 240 residues: tRNA pseudouridine synthase B (240 aa).

Residue D54 is the Nucleophile of the active site.

Belongs to the pseudouridine synthase TruB family. Type 1 subfamily.

The enzyme catalyses uridine(55) in tRNA = pseudouridine(55) in tRNA. Its function is as follows. Responsible for synthesis of pseudouridine from uracil-55 in the psi GC loop of transfer RNAs. The sequence is that of tRNA pseudouridine synthase B from Chlorobium phaeovibrioides (strain DSM 265 / 1930) (Prosthecochloris vibrioformis (strain DSM 265)).